A 357-amino-acid chain; its full sequence is Heme A synthase (357 aa).

5 consecutive transmembrane segments (helical) span residues 24 to 44 (LVRYWLYAVFVVLIAIVMVGG), 110 to 130 (MLARFVGFLVAVPLAFFWVTG), 140 to 160 (MLGLLALGGLQGAIGWWMVAS), 175 to 195 (IHLTTACIIITAVFYIARGLV), and 209 to 229 (FAGWIVFAVLVQIYLGGLVAG). His-272 contacts heme. Transmembrane regions (helical) follow at residues 274 to 294 (MFAYTVLVLTVLHSLQVWKQV), 303 to 323 (TIVLVGLVLIQAVIGIATLLM), and 325 to 345 (VPLHLGLTHQFFALIVLAFAV). Heme is bound at residue His-333.

Belongs to the COX15/CtaA family. Type 2 subfamily. As to quaternary structure, interacts with CtaB. The cofactor is heme b.

It is found in the cell membrane. The catalysed reaction is Fe(II)-heme o + 2 A + H2O = Fe(II)-heme a + 2 AH2. It participates in porphyrin-containing compound metabolism; heme A biosynthesis; heme A from heme O: step 1/1. Its function is as follows. Catalyzes the conversion of heme O to heme A by two successive hydroxylations of the methyl group at C8. The first hydroxylation forms heme I, the second hydroxylation results in an unstable dihydroxymethyl group, which spontaneously dehydrates, resulting in the formyl group of heme A. The chain is Heme A synthase from Brucella anthropi (strain ATCC 49188 / DSM 6882 / CCUG 24695 / JCM 21032 / LMG 3331 / NBRC 15819 / NCTC 12168 / Alc 37) (Ochrobactrum anthropi).